Reading from the N-terminus, the 304-residue chain is Ribosomal protein L11 methyltransferase (304 aa).

4 residues coordinate S-adenosyl-L-methionine: T156, G177, D199, and N240.

Belongs to the methyltransferase superfamily. PrmA family.

Its subcellular location is the cytoplasm. It carries out the reaction L-lysyl-[protein] + 3 S-adenosyl-L-methionine = N(6),N(6),N(6)-trimethyl-L-lysyl-[protein] + 3 S-adenosyl-L-homocysteine + 3 H(+). Functionally, methylates ribosomal protein L11. This Symbiobacterium thermophilum (strain DSM 24528 / JCM 14929 / IAM 14863 / T) protein is Ribosomal protein L11 methyltransferase.